The sequence spans 278 residues: NADPH-dependent 7-cyano-7-deazaguanine reductase (278 aa).

87-89 (IES) serves as a coordination point for substrate. 89–90 (SK) contributes to the NADPH binding site. Cys185 serves as the catalytic Thioimide intermediate. Asp192 (proton donor) is an active-site residue. 224 to 225 (HE) provides a ligand contact to substrate. 253–254 (RG) is a binding site for NADPH. Residues 255–278 (GLDINPYRSTNPTFSVQNHRSFRQ) are disordered. Positions 261-278 (YRSTNPTFSVQNHRSFRQ) are enriched in polar residues.

This sequence belongs to the GTP cyclohydrolase I family. QueF type 2 subfamily. In terms of assembly, homodimer.

It localises to the cytoplasm. The catalysed reaction is 7-aminomethyl-7-carbaguanine + 2 NADP(+) = 7-cyano-7-deazaguanine + 2 NADPH + 3 H(+). It participates in tRNA modification; tRNA-queuosine biosynthesis. Catalyzes the NADPH-dependent reduction of 7-cyano-7-deazaguanine (preQ0) to 7-aminomethyl-7-deazaguanine (preQ1). In Coxiella burnetii (strain CbuK_Q154) (Coxiella burnetii (strain Q154)), this protein is NADPH-dependent 7-cyano-7-deazaguanine reductase.